The primary structure comprises 224 residues: Myogenin (224 aa).

Phosphoserine; by CaMK2G occurs at positions 77 and 79. The 52-residue stretch at 81–132 (DRRRAATLREKRRLKKVNEAFEALKRSTLLNPNQRLPKVEILRSAIQYIERL) folds into the bHLH domain. Position 87 is a phosphothreonine; by CaMK2G (threonine 87).

In terms of assembly, homodimer and heterodimer with E12; heterodimerization enhances MYOG DNA-binding and transcriptional activities. Interacts with SMARCA4/BRG1/BAF190A. Interacts (via C-terminal region) with SSRP1 and SUPT16H; the interaction is indicative of an interaction with the FACT complex. nteracts with CSRP3. In terms of processing, phosphorylated by CAMK2G on threonine and serine amino acids in a muscle activity-dependent manner. Phosphorylation of Thr-87 impairs both DNA-binding and trans-activation functions in contracting muscles. Expressed in myoblast cells. Expressed weakly in myotubes (at protein level). Expressed strongly in denervated muscles and in satellite cells isolated from denervated muscles. Expressed weakly in innervated muscle and in satellite cells isolated from innervated muscles.

The protein resides in the nucleus. In terms of biological role, acts as a transcriptional activator that promotes transcription of muscle-specific target genes and plays a role in muscle differentiation, cell cycle exit and muscle atrophy. Essential for the development of functional embryonic skeletal fiber muscle differentiation. However is dispensable for postnatal skeletal muscle growth; phosphorylation by CAMK2G inhibits its transcriptional activity in respons to muscle activity. Required for the recruitment of the FACT complex to muscle-specific promoter regions, thus promoting gene expression initiation. During terminal myoblast differentiation, plays a role as a strong activator of transcription at loci with an open chromatin structure previously initiated by MYOD1. Together with MYF5 and MYOD1, co-occupies muscle-specific gene promoter core regions during myogenesis. Also cooperates with myocyte-specific enhancer factor MEF2D and BRG1-dependent recruitment of SWI/SNF chromatin-remodeling enzymes to alter chromatin structure at myogenic late gene promoters. Facilitates cell cycle exit during terminal muscle differentiation through the up-regulation of miR-20a expression, which in turn represses genes involved in cell cycle progression. Binds to the E-box containing (E1) promoter region of the miR-20a gene. Also plays a role in preventing reversal of muscle cell differentiation. Contributes to the atrophy-related gene expression in adult denervated muscles. Induces fibroblasts to differentiate into myoblasts. This chain is Myogenin (Myog), found in Mus musculus (Mouse).